We begin with the raw amino-acid sequence, 336 residues long: Thiamine thiazole synthase (336 aa).

Residues Ala89, 110–111 (ES), Gly118, and Cys183 each bind substrate. Cys219 carries the 2,3-didehydroalanine (Cys) modification. Substrate is bound by residues Asp221, His236, Met288, and 298–300 (RMG).

The protein belongs to the THI4 family. Homooctamer. Requires Fe cation as cofactor. During the catalytic reaction, a sulfide is transferred from Cys-219 to a reaction intermediate, generating a dehydroalanine residue.

It is found in the cytoplasm. It localises to the nucleus. It catalyses the reaction [ADP-thiazole synthase]-L-cysteine + glycine + NAD(+) = [ADP-thiazole synthase]-dehydroalanine + ADP-5-ethyl-4-methylthiazole-2-carboxylate + nicotinamide + 3 H2O + 2 H(+). In terms of biological role, involved in biosynthesis of the thiamine precursor thiazole. Catalyzes the conversion of NAD and glycine to adenosine diphosphate 5-(2-hydroxyethyl)-4-methylthiazole-2-carboxylic acid (ADT), an adenylated thiazole intermediate. The reaction includes an iron-dependent sulfide transfer from a conserved cysteine residue of the protein to a thiazole intermediate. The enzyme can only undergo a single turnover, which suggests it is a suicide enzyme. May have additional roles in adaptation to various stress conditions and in DNA damage tolerance. The polypeptide is Thiamine thiazole synthase (Puccinia graminis f. sp. tritici (strain CRL 75-36-700-3 / race SCCL) (Black stem rust fungus)).